A 504-amino-acid chain; its full sequence is Light-independent protochlorophyllide reductase subunit B (504 aa).

Residue Asp-36 participates in [4Fe-4S] cluster binding. Asp-279 acts as the Proton donor in catalysis. Gly-414–Leu-415 lines the substrate pocket.

This sequence belongs to the ChlB/BchB/BchZ family. In terms of assembly, protochlorophyllide reductase is composed of three subunits; BchL, BchN and BchB. Forms a heterotetramer of two BchB and two BchN subunits. Requires [4Fe-4S] cluster as cofactor.

The catalysed reaction is chlorophyllide a + oxidized 2[4Fe-4S]-[ferredoxin] + 2 ADP + 2 phosphate = protochlorophyllide a + reduced 2[4Fe-4S]-[ferredoxin] + 2 ATP + 2 H2O. Its pathway is porphyrin-containing compound metabolism; bacteriochlorophyll biosynthesis (light-independent). Functionally, component of the dark-operative protochlorophyllide reductase (DPOR) that uses Mg-ATP and reduced ferredoxin to reduce ring D of protochlorophyllide (Pchlide) to form chlorophyllide a (Chlide). This reaction is light-independent. The NB-protein (BchN-BchB) is the catalytic component of the complex. In Acidiphilium rubrum, this protein is Light-independent protochlorophyllide reductase subunit B.